A 267-amino-acid chain; its full sequence is Non-homologous end joining protein Ku (267 aa).

Residues Ala-11–Ala-195 form the Ku domain. Residues Gly-229–Gly-267 are disordered.

Belongs to the prokaryotic Ku family. In terms of assembly, homodimer. Interacts with LigD.

Functionally, with LigD forms a non-homologous end joining (NHEJ) DNA repair enzyme, which repairs dsDNA breaks with reduced fidelity. Binds linear dsDNA with 5'- and 3'- overhangs but not closed circular dsDNA nor ssDNA. Recruits and stimulates the ligase activity of LigD. The sequence is that of Non-homologous end joining protein Ku from Cereibacter sphaeroides (strain KD131 / KCTC 12085) (Rhodobacter sphaeroides).